A 213-amino-acid polypeptide reads, in one-letter code: Kynurenine formamidase (213 aa).

Position 18 (Trp-18) interacts with substrate. Residues His-48, His-52, and Asp-54 each coordinate Zn(2+). His-58 serves as the catalytic Proton donor/acceptor. Zn(2+) contacts are provided by His-160 and Glu-172.

It belongs to the Cyclase 1 superfamily. KynB family. In terms of assembly, homodimer. It depends on Zn(2+) as a cofactor.

The enzyme catalyses N-formyl-L-kynurenine + H2O = L-kynurenine + formate + H(+). Its pathway is amino-acid degradation; L-tryptophan degradation via kynurenine pathway; L-kynurenine from L-tryptophan: step 2/2. Catalyzes the hydrolysis of N-formyl-L-kynurenine to L-kynurenine, the second step in the kynurenine pathway of tryptophan degradation. This is Kynurenine formamidase from Burkholderia pseudomallei (strain 668).